A 122-amino-acid chain; its full sequence is Large ribosomal subunit protein uL14 (122 aa).

This sequence belongs to the universal ribosomal protein uL14 family. Part of the 50S ribosomal subunit. Forms a cluster with proteins L3 and L19. In the 70S ribosome, L14 and L19 interact and together make contacts with the 16S rRNA in bridges B5 and B8.

Binds to 23S rRNA. Forms part of two intersubunit bridges in the 70S ribosome. The chain is Large ribosomal subunit protein uL14 from Coxiella burnetii (strain RSA 331 / Henzerling II).